The chain runs to 395 residues: Imidazolonepropionase (395 aa).

Fe(3+) contacts are provided by His72 and His74. Zn(2+) contacts are provided by His72 and His74. Residues Arg81, Tyr144, and His174 each coordinate 4-imidazolone-5-propanoate. Tyr144 provides a ligand contact to N-formimidoyl-L-glutamate. His231 is a Fe(3+) binding site. His231 contacts Zn(2+). Residue Glu234 participates in 4-imidazolone-5-propanoate binding. A Fe(3+)-binding site is contributed by Asp306. Position 306 (Asp306) interacts with Zn(2+).

The protein belongs to the metallo-dependent hydrolases superfamily. HutI family. The cofactor is Zn(2+). Requires Fe(3+) as cofactor.

The protein resides in the cytoplasm. It carries out the reaction 4-imidazolone-5-propanoate + H2O = N-formimidoyl-L-glutamate. It participates in amino-acid degradation; L-histidine degradation into L-glutamate; N-formimidoyl-L-glutamate from L-histidine: step 3/3. Catalyzes the hydrolytic cleavage of the carbon-nitrogen bond in imidazolone-5-propanoate to yield N-formimidoyl-L-glutamate. It is the third step in the universal histidine degradation pathway. In Pyrobaculum arsenaticum (strain DSM 13514 / JCM 11321 / PZ6), this protein is Imidazolonepropionase.